Here is a 389-residue protein sequence, read N- to C-terminus: Gibberellin 20 oxidase 2 (389 aa).

Residues 1–17 are compositionally biased toward pro residues; it reads MVAEHPTPPQPHQPPPM. The segment at 1-23 is disordered; the sequence is MVAEHPTPPQPHQPPPMDSTAGS. The Fe2OG dioxygenase domain occupies 224 to 324; the sequence is DSSSIMRCNY…RRSLAFFLCP (101 aa). 3 residues coordinate Fe cation: H249, D251, and H305. Residue R315 is part of the active site.

It belongs to the iron/ascorbate-dependent oxidoreductase family. GA20OX subfamily. Fe cation serves as cofactor. The cofactor is L-ascorbate.

It carries out the reaction gibberellin A12 + 2 2-oxoglutarate + 3 O2 + H(+) = gibberellin A9 + 2 succinate + 3 CO2 + 2 H2O. The catalysed reaction is gibberellin A53 + 2 2-oxoglutarate + 3 O2 + H(+) = gibberellin A20 + 2 succinate + 3 CO2 + 2 H2O. Key oxidase enzyme in the biosynthesis of gibberellin that catalyzes the conversion of GA53 to GA20 via a three-step oxidation at C-20 of the GA skeleton. The chain is Gibberellin 20 oxidase 2 (20ox2) from Oryza sativa subsp. indica (Rice).